Reading from the N-terminus, the 1374-residue chain is Tripeptidyl-peptidase 2 (1374 aa).

The 497-residue stretch at 62 to 558 folds into the Peptidase S8 domain; the sequence is ALLLNKTDTE…QGMIKIATAY (497 aa). Active-site charge relay system residues include Asp-93, His-314, and Ser-499.

It belongs to the peptidase S8 family. As to expression, expressed in intestinal fat-storing cells and some head neurons.

The enzyme catalyses Release of an N-terminal tripeptide from a polypeptide.. Functionally, component of the proteolytic cascade acting downstream of the 26S proteasome in the ubiquitin-proteasome pathway. Has a role in regulation of fat storage. The polypeptide is Tripeptidyl-peptidase 2 (tpp-2) (Caenorhabditis elegans).